Reading from the N-terminus, the 92-residue chain is Small ribosomal subunit protein uS19c (92 aa).

Belongs to the universal ribosomal protein uS19 family.

It localises to the plastid. Its subcellular location is the chloroplast. Functionally, protein S19 forms a complex with S13 that binds strongly to the 16S ribosomal RNA. This Chaetosphaeridium globosum (Charophycean green alga) protein is Small ribosomal subunit protein uS19c.